The sequence spans 93 residues: Acyl carrier protein AcpXL (93 aa).

One can recognise a Carrier domain in the interval 2-88 (SSTFDKVADI…NLCAKIDELV (87 aa)). S37 carries the O-(pantetheine 4'-phosphoryl)serine modification.

4'-phosphopantetheine is transferred from CoA to a specific serine of apo-ACP by AcpS. This modification is essential for activity because fatty acids are bound in thioester linkage to the sulfhydryl of the prosthetic group.

The protein localises to the cytoplasm. Its pathway is glycolipid biosynthesis; KDO(2)-lipid A biosynthesis. Its function is as follows. Carrier of the growing fatty acid chain in fatty acid biosynthesis. Is involved in the transfer of long hydroxylated fatty acids to lipid A. This Brucella melitensis biotype 1 (strain ATCC 23456 / CCUG 17765 / NCTC 10094 / 16M) protein is Acyl carrier protein AcpXL (acpXL).